The sequence spans 170 residues: IMPACT family member YDL177C (170 aa).

Residues 79–98 are disordered; it reads KKKGNKANKSNNSHVNKSRN.

This sequence belongs to the IMPACT family.

The sequence is that of IMPACT family member YDL177C from Saccharomyces cerevisiae (strain ATCC 204508 / S288c) (Baker's yeast).